A 331-amino-acid chain; its full sequence is 4-hydroxythreonine-4-phosphate dehydrogenase (331 aa).

2 residues coordinate substrate: His137 and Thr138. 3 residues coordinate a divalent metal cation: His167, His212, and His267. Substrate contacts are provided by Lys275, Asn284, and Arg293.

This sequence belongs to the PdxA family. In terms of assembly, homodimer. It depends on Zn(2+) as a cofactor. The cofactor is Mg(2+). Co(2+) serves as cofactor.

The protein localises to the cytoplasm. It catalyses the reaction 4-(phosphooxy)-L-threonine + NAD(+) = 3-amino-2-oxopropyl phosphate + CO2 + NADH. The protein operates within cofactor biosynthesis; pyridoxine 5'-phosphate biosynthesis; pyridoxine 5'-phosphate from D-erythrose 4-phosphate: step 4/5. Catalyzes the NAD(P)-dependent oxidation of 4-(phosphooxy)-L-threonine (HTP) into 2-amino-3-oxo-4-(phosphooxy)butyric acid which spontaneously decarboxylates to form 3-amino-2-oxopropyl phosphate (AHAP). This chain is 4-hydroxythreonine-4-phosphate dehydrogenase, found in Yersinia pseudotuberculosis serotype I (strain IP32953).